Here is a 204-residue protein sequence, read N- to C-terminus: Facilitator of iron transport 3 (204 aa).

An N-terminal signal peptide occupies residues 1–18 (MKFSSALVLSAVAATALA). Disordered regions lie at residues 84–104 (SAAE…SGSS) and 133–175 (EGSS…SSTA). Positions 135–175 (SSNTWSPSSTSTSSEAATSSASTTATTTAETSSSATSSSTA) are enriched in low complexity. Residue glycine 182 is the site of GPI-anchor amidated glycine attachment. The propeptide at 183–204 (AADAITAGTGLMGAALAAVMLL) is removed in mature form.

The GPI-anchor is attached to the protein in the endoplasmic reticulum and serves to target the protein to the cell surface. There, the glucosamine-inositol phospholipid moiety is cleaved off and the GPI-modified mannoprotein is covalently attached via its lipidless GPI glycan remnant to the 1,6-beta-glucan of the outer cell wall layer.

It is found in the secreted. Its subcellular location is the cell wall. It localises to the membrane. In terms of biological role, involved in the uptake of non-siderophore and siderophore sources of iron. Has a role in the retention of iron in the cell wall and periplasmic space. This is Facilitator of iron transport 3 (FIT3) from Saccharomyces cerevisiae (strain ATCC 204508 / S288c) (Baker's yeast).